We begin with the raw amino-acid sequence, 123 residues long: Defensin beta 118 (123 aa).

The N-terminal stretch at 1–19 is a signal peptide; sequence MKLLLLALPVLVLLPQVIP. Intrachain disulfides connect cysteine 27/cysteine 54, cysteine 34/cysteine 48, and cysteine 38/cysteine 55. Residues 65–123 constitute a propeptide that is removed on maturation; it reads VPMTSPTPLSDSTPGIIDDILTVRFTTDYFEVSSKKDMVEESEAGRGTETSLPNVHHSS. Over residues 100–110 the composition is skewed to basic and acidic residues; the sequence is KDMVEESEAGR. The tract at residues 100 to 123 is disordered; it reads KDMVEESEAGRGTETSLPNVHHSS. A compositionally biased stretch (polar residues) spans 112 to 123; sequence TETSLPNVHHSS.

The protein belongs to the beta-defensin family. Post-translationally, the three-dimensional structure formed by the three intramolecular disulfide bridges is indispensable for antimicrobial activity.

It is found in the secreted. Host defense peptide that exhibits antimicrobial activity against both Gram-negative bacteria, such as E.coli and S.typhimurium, and Gram-positive bacteria, such as S.aureus and B.subtilis. Inhibits cell adhesion of E.coli on intestinal epithelial enterocytes. Causes rapid permeabilization of both the outer and inner membrane of E.coli, leading to morphological alterations on the bacterial surface. Binds to bacterial lipopolysaccharides (LPS) with high affinity, and may thereby be involved in immunoregulation through LPS neutralization. May contribute to epididymal innate immunity and protect the sperm against attack by microorganisms. The sequence is that of Defensin beta 118 (DEFB118) from Pan troglodytes (Chimpanzee).